We begin with the raw amino-acid sequence, 560 residues long: Putative transport protein ESA_02488 (560 aa).

5 helical membrane passes run 8–28 (LLNGNYILLLFVVLALGLCLG), 32–52 (LGSVQLGNSIGVLVVSLLLGQ), 66–86 (FMLFIFCVGVEAGPNFFSIFF), 91–111 (NYLMLALVMVGSALLIALGLG), and 158–178 (HLSLGYALTYLIGLVSLIFGA). 2 consecutive RCK C-terminal domains span residues 200–288 (RGLD…SFRN) and 292–373 (VFDR…RIGF). 5 consecutive transmembrane segments (helical) span residues 383-403 (LLAFCAFFIVGLMIGMITFQF), 406-426 (FSFGIGNAAGLLFAGIMLGFL), 447-467 (FGLMVFMAGVGLSAGSGIGHG), 475-495 (MLFAGLIVSLLPVVICFLFGA), and 539-559 (YAIANVLLTLAGTLIVIIWPG).

The protein belongs to the AAE transporter (TC 2.A.81) family. YbjL subfamily.

The protein resides in the cell membrane. The chain is Putative transport protein ESA_02488 from Cronobacter sakazakii (strain ATCC BAA-894) (Enterobacter sakazakii).